Reading from the N-terminus, the 432-residue chain is Trigger factor (432 aa).

Positions 161–246 constitute a PPIase FKBP-type domain; it reads EDRVTLDFTG…LKKVEERELP (86 aa).

This sequence belongs to the FKBP-type PPIase family. Tig subfamily.

It is found in the cytoplasm. The enzyme catalyses [protein]-peptidylproline (omega=180) = [protein]-peptidylproline (omega=0). Functionally, involved in protein export. Acts as a chaperone by maintaining the newly synthesized protein in an open conformation. Functions as a peptidyl-prolyl cis-trans isomerase. This is Trigger factor from Salmonella arizonae (strain ATCC BAA-731 / CDC346-86 / RSK2980).